Consider the following 478-residue polypeptide: Protein ZINC INDUCED FACILITATOR-LIKE 1 (478 aa).

12 helical membrane-spanning segments follow: residues 43–63 (IIVL…YFMI), 81–101 (FVGC…GLVA), 108–128 (PVIL…GLSL), 130–150 (FWMA…LGPI), 169–189 (AVST…GFLA), 208–228 (FPFF…TIVS), 280–300 (IIVY…FSLW), 317–337 (VGSV…SLYS), 346–367 (IIVT…PLIA), 378–398 (VTSA…GLFI), 415–435 (IAMT…GIIF), and 453–473 (VFFI…KPFL).

It belongs to the major facilitator superfamily. As to expression, predominantly expressed in roots and stomatal guard cells. Detected in anther stamen filaments and shoot apical meristem. In the mature portion of roots, restricted to the cortex. At the root tip, highly expressed in both the cortical and epidermal cell layers of the apical meristem and the transition zone, while absent from the quiescent center or the columella cells. Not detected in lateral root primordia.

It is found in the cell membrane. The protein localises to the vacuole membrane. In terms of biological role, major facilitator superfamily (MFS) transporter probably involved in 2,4-dichlorophenoxyacetic acid (2,4-D) export. K(+) may be the physiological substrate of the transporter. Functionally, modulates root auxin-related processes. Involved in auxin efflux and acts as a positive regulator of shootward transport at the root apex. May mediate proton efflux from the vacuolar compartment. Its function is as follows. Mediates drought stress tolerance by regulating stomatal closure. In Arabidopsis thaliana (Mouse-ear cress), this protein is Protein ZINC INDUCED FACILITATOR-LIKE 1 (ZIFL1).